A 170-amino-acid polypeptide reads, in one-letter code: J domain-containing protein (170 aa).

The J domain maps to D17–R82. The tract at residues Q101–I170 is disordered. Residues N110–G120 are compositionally biased toward basic and acidic residues. A compositionally biased stretch (low complexity) spans S121–P134.

This Bombyx mori (Silk moth) protein is J domain-containing protein (jdp).